The sequence spans 855 residues: Spindle and centriole-associated protein 1 (855 aa).

The interval Q164–T200 is disordered. T235 bears the Phosphothreonine mark. Over residues K300–K311 the composition is skewed to basic residues. The tract at residues K300–N328 is disordered. A compositionally biased stretch (polar residues) spans L314–N328. Residues N325–V437 adopt a coiled-coil conformation. S640 and S644 each carry phosphoserine. The stretch at G725–Q751 forms a coiled coil. 3 positions are modified to phosphoserine: S760, S764, and S819. The interval E789–N834 is disordered. The span at S794–G828 shows a compositional bias: polar residues.

As to quaternary structure, interacts with CEP120.

It is found in the cytoplasm. The protein resides in the cytoskeleton. The protein localises to the microtubule organizing center. It localises to the centrosome. Its subcellular location is the centriole. It is found in the spindle. Functionally, regulator required for centriole duplication, for proper bipolar spindle formation and chromosome congression in mitosis. The sequence is that of Spindle and centriole-associated protein 1 (SPICE1) from Pongo abelii (Sumatran orangutan).